Here is a 337-residue protein sequence, read N- to C-terminus: Glyceraldehyde-3-phosphate dehydrogenase 3 (337 aa).

NAD(+) contacts are provided by residues R12 to M13 and K80. Residues S152–T154 and T183 contribute to the D-glyceraldehyde 3-phosphate site. Residue C153 is the Nucleophile of the active site. N184 contributes to the NAD(+) binding site. D-glyceraldehyde 3-phosphate contacts are provided by residues R198, T211–G212, and R234. N317 is a binding site for NAD(+).

The protein belongs to the glyceraldehyde-3-phosphate dehydrogenase family. Homotetramer.

The protein localises to the cytoplasm. The catalysed reaction is D-glyceraldehyde 3-phosphate + phosphate + NAD(+) = (2R)-3-phospho-glyceroyl phosphate + NADH + H(+). The protein operates within carbohydrate degradation; glycolysis; pyruvate from D-glyceraldehyde 3-phosphate: step 1/5. It participates in carbohydrate biosynthesis; gluconeogenesis. Functionally, catalyzes the oxidative phosphorylation of glyceraldehyde 3-phosphate (G3P) to 1,3-bisphosphoglycerate (BPG) using the cofactor NAD. The first reaction step involves the formation of a hemiacetal intermediate between G3P and a cysteine residue, and this hemiacetal intermediate is then oxidized to a thioester, with concomitant reduction of NAD to NADH. The reduced NADH is then exchanged with the second NAD, and the thioester is attacked by a nucleophilic inorganic phosphate to produce BPG. The sequence is that of Glyceraldehyde-3-phosphate dehydrogenase 3 (gap3) from Nostoc sp. (strain PCC 7120 / SAG 25.82 / UTEX 2576).